The chain runs to 420 residues: Pyrin and HIN domain-containing protein 1 (420 aa).

A Pyrin domain is found at 1–87; sequence MVNEYKRIVL…ANKLKNEKAK (87 aa). 2 disordered regions span residues 82-201 and 216-236; these read KNEK…SSSA and RLKNVPKEPSEENGHQQGSKK. Over residues 87–102 the composition is skewed to basic residues; it reads KAKRTRTGKRKTAAKR. Polar residues-rich tracts occupy residues 108 to 118 and 126 to 151; these read PSTSQPMSTTN and GRSTPDTQVAQLSLPTASRRNQAIQI. The span at 152–169 shows a compositional bias: low complexity; that stretch reads SPTIASSSGQTSSRSSET. Residues 170–201 show a composition bias toward polar residues; the sequence is LQSIIQSPKTPKRPSSSILDPPVSSGTASSSA. In terms of domain architecture, HIN-200 spans 219 to 416; sequence NVPKEPSEEN…STTHSNMQVI (198 aa). Basic and acidic residues predominate over residues 220 to 229; it reads VPKEPSEENG.

This sequence belongs to the HIN-200 family.

It is found in the nucleus. The sequence is that of Pyrin and HIN domain-containing protein 1 from Mus musculus (Mouse).